We begin with the raw amino-acid sequence, 165 residues long: UPF0262 protein Sala_0765 (165 aa).

The protein belongs to the UPF0262 family.

The protein is UPF0262 protein Sala_0765 of Sphingopyxis alaskensis (strain DSM 13593 / LMG 18877 / RB2256) (Sphingomonas alaskensis).